A 343-amino-acid chain; its full sequence is Anthranilate phosphoribosyltransferase (343 aa).

Residues G86, 89 to 90 (GD), T94, 96 to 99 (NIST), 114 to 122 (KHGNRSASG), and S126 each bind 5-phospho-alpha-D-ribose 1-diphosphate. G86 contacts anthranilate. Residue S98 coordinates Mg(2+). Position 117 (N117) interacts with anthranilate. R172 lines the anthranilate pocket. Mg(2+) is bound by residues D231 and E232.

Belongs to the anthranilate phosphoribosyltransferase family. Homodimer. It depends on Mg(2+) as a cofactor.

The catalysed reaction is N-(5-phospho-beta-D-ribosyl)anthranilate + diphosphate = 5-phospho-alpha-D-ribose 1-diphosphate + anthranilate. It participates in amino-acid biosynthesis; L-tryptophan biosynthesis; L-tryptophan from chorismate: step 2/5. Functionally, catalyzes the transfer of the phosphoribosyl group of 5-phosphorylribose-1-pyrophosphate (PRPP) to anthranilate to yield N-(5'-phosphoribosyl)-anthranilate (PRA). This Synechococcus sp. (strain JA-2-3B'a(2-13)) (Cyanobacteria bacterium Yellowstone B-Prime) protein is Anthranilate phosphoribosyltransferase.